A 101-amino-acid polypeptide reads, in one-letter code: Small ribosomal subunit protein uS14 (101 aa).

The protein belongs to the universal ribosomal protein uS14 family. Part of the 30S ribosomal subunit. Contacts proteins S3 and S10.

In terms of biological role, binds 16S rRNA, required for the assembly of 30S particles and may also be responsible for determining the conformation of the 16S rRNA at the A site. This Psychromonas ingrahamii (strain DSM 17664 / CCUG 51855 / 37) protein is Small ribosomal subunit protein uS14.